Reading from the N-terminus, the 289-residue chain is Acetylglutamate kinase (289 aa).

Residues 60–61, arginine 82, and asparagine 182 each bind substrate; that span reads GG.

Belongs to the acetylglutamate kinase family. ArgB subfamily.

The protein localises to the cytoplasm. It carries out the reaction N-acetyl-L-glutamate + ATP = N-acetyl-L-glutamyl 5-phosphate + ADP. It functions in the pathway amino-acid biosynthesis; L-arginine biosynthesis; N(2)-acetyl-L-ornithine from L-glutamate: step 2/4. In terms of biological role, catalyzes the ATP-dependent phosphorylation of N-acetyl-L-glutamate. The sequence is that of Acetylglutamate kinase from Methanothrix thermoacetophila (strain DSM 6194 / JCM 14653 / NBRC 101360 / PT) (Methanosaeta thermophila).